The following is a 570-amino-acid chain: Urease subunit alpha (570 aa).

The Urease domain maps to 131-570 (GGMDSHIHFI…LPMAQRYFLF (440 aa)). Histidine 136, histidine 138, and lysine 219 together coordinate Ni(2+). Position 219 is an N6-carboxylysine (lysine 219). Substrate is bound at residue histidine 221. Ni(2+) is bound by residues histidine 248 and histidine 274. Histidine 322 acts as the Proton donor in catalysis. Residue aspartate 362 participates in Ni(2+) binding.

This sequence belongs to the metallo-dependent hydrolases superfamily. Urease alpha subunit family. Heterotrimer of UreA (gamma), UreB (beta) and UreC (alpha) subunits. Three heterotrimers associate to form the active enzyme. Ni cation serves as cofactor. Carboxylation allows a single lysine to coordinate two nickel ions.

Its subcellular location is the cytoplasm. The catalysed reaction is urea + 2 H2O + H(+) = hydrogencarbonate + 2 NH4(+). It functions in the pathway nitrogen metabolism; urea degradation; CO(2) and NH(3) from urea (urease route): step 1/1. The protein is Urease subunit alpha of Rhizobium etli (strain ATCC 51251 / DSM 11541 / JCM 21823 / NBRC 15573 / CFN 42).